The following is a 316-amino-acid chain: Porphobilinogen deaminase (316 aa).

Residue Cys249 is modified to S-(dipyrrolylmethanemethyl)cysteine.

The protein belongs to the HMBS family. In terms of assembly, monomer. Requires dipyrromethane as cofactor.

It catalyses the reaction 4 porphobilinogen + H2O = hydroxymethylbilane + 4 NH4(+). Its pathway is porphyrin-containing compound metabolism; protoporphyrin-IX biosynthesis; coproporphyrinogen-III from 5-aminolevulinate: step 2/4. Its function is as follows. Tetrapolymerization of the monopyrrole PBG into the hydroxymethylbilane pre-uroporphyrinogen in several discrete steps. This Nitrobacter hamburgensis (strain DSM 10229 / NCIMB 13809 / X14) protein is Porphobilinogen deaminase.